Reading from the N-terminus, the 332-residue chain is Super small secreted glycoprotein (332 aa).

Residues 1–33 form the signal peptide; it reads MGSGYQLLQLPRERFRKTSFLVWVIILFQRAIS. The N-linked (GlcNAc...) asparagine; by host glycan is linked to N41. 2 cysteine pairs are disulfide-bonded: C109-C136 and C122-C148. Residues N205, N239, N258, and N269 are each glycosylated (N-linked (GlcNAc...) asparagine; by host).

Belongs to the filoviruses glycoprotein family.

It is found in the secreted. This Homo sapiens (Human) protein is Super small secreted glycoprotein (GP).